Consider the following 633-residue polypeptide: Carbon catabolite-derepressing protein kinase (633 aa).

Low complexity predominate over residues 1 to 16 (MSSNNNTNTAPANANS). The interval 1 to 46 (MSSNNNTNTAPANANSSHHHHHHHHHHHHHGHGGSNSTLNNPKSSL) is disordered. Residues 17-32 (SHHHHHHHHHHHHHGH) are compositionally biased toward basic residues. Positions 55-306 (YQIVKTLGEG…IHEIMQDDWF (252 aa)) constitute a Protein kinase domain. ATP is bound by residues 61–69 (LGEGSFGKV) and lysine 84. Aspartate 177 acts as the Proton acceptor in catalysis. Threonine 210 carries the phosphothreonine; by autocatalysis modification. Positions 313-392 (YLLPPDLKPH…YMLIKENKSL (80 aa)) are auto-inhibitory domain (AID). Residues 317–345 (PDLKPHPEEENENNDSKKDGSSPDNDEID) are disordered. Residues 319 to 337 (LKPHPEEENENNDSKKDGS) show a composition bias toward basic and acidic residues. In terms of domain architecture, UBA spans 348-389 (LVNILSSTMGYEKDEIYESLESSEDTPAFNEIRDAYMLIKEN). Positions 409 to 434 (FLSQSPPTFQQQSKSHQKSQVDHETA) are disordered. The residue at position 413 (serine 413) is a Phosphoserine. Lysine 461 participates in a covalent cross-link: Glycyl lysine isopeptide (Lys-Gly) (interchain with G-Cter in ubiquitin). A Phosphoserine modification is found at serine 487. A Glycyl lysine isopeptide (Lys-Gly) (interchain with G-Cter in SUMO) cross-link involves residue lysine 549. Serine 632 is subject to Phosphoserine.

Belongs to the protein kinase superfamily. CAMK Ser/Thr protein kinase family. SNF1 subfamily. Component of the AMP-activated protein kinase complex also known as the SNF1 kinase complex (Snf1c), a heterotrimeric complex composed of an alpha subunit (SNF1), a regulatory subunit beta (GAL83 and substoichiometric alternate beta subunits SIP1 and SIP2), and a regulatory subunit gamma (SNF4). Interacts with the transcriptional activator SIP4. Interacts with SAK1. Interacts with CTK1: Interacts with adenylate cyclase CYR1. Post-translationally, phosphorylation at Thr-210 in response to glucose limitation leads to activation of kinase activity. ADP, but not AMP, protects the enzyme from dephosphorylation at Thr-210 by GLC7. Sumoylation by the SUMO (E3) ligase MMS21 leads to inhibition by interaction of SUMO attached to Lys-549 with a SUMO-interacting sequence motif located near the active site of SNF1, and by targeting SNF1 for glucose-induced destruction via the SLX5-SLX8 (SUMO-directed) ubiquitin ligase.

Its subcellular location is the cytoplasm. The protein localises to the nucleus. It localises to the nucleus membrane. The catalysed reaction is L-seryl-[protein] + ATP = O-phospho-L-seryl-[protein] + ADP + H(+). It carries out the reaction L-threonyl-[protein] + ATP = O-phospho-L-threonyl-[protein] + ADP + H(+). The kinase activity is positively regulated by SNF4 via sequestration of the SNF1 auto-inhibitory domain (AID). Serine/threonine protein kinase essential for release from glucose repression. Catalytic subunit of the AMP-activated protein kinase complex also known as the SNF1 kinase complex (Snf1c), a central regulator of cellular energy homeostasis, which, in response to a fall in intracellular ATP levels, activates energy-producing pathways and inhibits energy-consuming processes. The complex phosphorylates histone H3 to form H3S10ph, which promotes H3K14ac formation, leading to transcriptional activation through TBP recruitment to the promoters. The complex also negatively regulates the HOG1 MAPK pathway in ER stress response including unfolded protein response (UPR). Under nutrient/energy depletion, the complex phosphorylates and activates PAS kinase PSK1 which in turn activates PBS1, leading to the inhibition of the TORC1 signaling pathway. SNF1 also interacts and phosphorylates adenylate cyclase CYR1 and negatively regulates the protein kinase A signaling pathway. Also phosphorylates and regulates the transcriptional activator CAT8. This Saccharomyces cerevisiae (strain ATCC 204508 / S288c) (Baker's yeast) protein is Carbon catabolite-derepressing protein kinase.